The sequence spans 50 residues: uncharacterized protein (50 aa).

This is an uncharacterized protein from Dichelobacter nodosus (Bacteroides nodosus).